A 506-amino-acid chain; its full sequence is 2-isopropylmalate synthase (506 aa).

One can recognise a Pyruvate carboxyltransferase domain in the interval 4-266; that stretch reads ILFMDTTLRD…EPSITLKEIK (263 aa). Mn(2+) is bound by residues Asp13, His201, His203, and Asn237. Residues 390–506 are regulatory domain; it reads NITQLQVHFV…KLKSFIQLVK (117 aa).

Belongs to the alpha-IPM synthase/homocitrate synthase family. LeuA type 1 subfamily. As to quaternary structure, homodimer. It depends on Mn(2+) as a cofactor.

The protein localises to the cytoplasm. The catalysed reaction is 3-methyl-2-oxobutanoate + acetyl-CoA + H2O = (2S)-2-isopropylmalate + CoA + H(+). It participates in amino-acid biosynthesis; L-leucine biosynthesis; L-leucine from 3-methyl-2-oxobutanoate: step 1/4. In terms of biological role, catalyzes the condensation of the acetyl group of acetyl-CoA with 3-methyl-2-oxobutanoate (2-ketoisovalerate) to form 3-carboxy-3-hydroxy-4-methylpentanoate (2-isopropylmalate). The sequence is that of 2-isopropylmalate synthase from Bacillus thuringiensis subsp. konkukian (strain 97-27).